We begin with the raw amino-acid sequence, 186 residues long: Elongation factor P (186 aa).

This sequence belongs to the elongation factor P family.

The protein resides in the cytoplasm. Its pathway is protein biosynthesis; polypeptide chain elongation. Involved in peptide bond synthesis. Stimulates efficient translation and peptide-bond synthesis on native or reconstituted 70S ribosomes in vitro. Probably functions indirectly by altering the affinity of the ribosome for aminoacyl-tRNA, thus increasing their reactivity as acceptors for peptidyl transferase. The polypeptide is Elongation factor P (Prochlorococcus marinus (strain MIT 9312)).